The primary structure comprises 263 residues: NADH dehydrogenase [ubiquinone] iron-sulfur protein 3, mitochondrial (263 aa).

Residues 1-35 (MVAAVARLWWRGLLGASALTRGAGRPSVLLLPVRR) constitute a mitochondrion transit peptide.

The protein belongs to the complex I 30 kDa subunit family. As to quaternary structure, core subunit of respiratory chain NADH dehydrogenase (Complex I) which is composed of 45 different subunits. Interacts with NDUFAF3. Interacts with RAB5IF. Found in subcomplexes containing subunits NDUFS2, MT-ND1 and NDUFA13.

It is found in the mitochondrion inner membrane. The catalysed reaction is a ubiquinone + NADH + 5 H(+)(in) = a ubiquinol + NAD(+) + 4 H(+)(out). Functionally, core subunit of the mitochondrial membrane respiratory chain NADH dehydrogenase (Complex I) which catalyzes electron transfer from NADH through the respiratory chain, using ubiquinone as an electron acceptor. Essential for the catalytic activity and assembly of complex I. The polypeptide is NADH dehydrogenase [ubiquinone] iron-sulfur protein 3, mitochondrial (NDUFS3) (Gorilla gorilla gorilla (Western lowland gorilla)).